The sequence spans 845 residues: Translation initiation factor IF-2 (845 aa).

Residues 1–260 form a disordered region; sequence MSDEQDKPTL…HMTSSGPREK (260 aa). Over residues 68-81 the composition is skewed to pro residues; it reads APAPAPAAPRPAAP. Residues 101–140 show a composition bias toward basic and acidic residues; that stretch reads REAEEARMAALEENRRREEAERARAAEEERARAEKREEQA. Composition is skewed to low complexity over residues 141–166 and 173–191; these read ATKA…APPA and TAAR…RFTP. The span at 194–215 shows a compositional bias: basic and acidic residues; the sequence is ALKRPEPKRPEPKASRGGENRR. A tr-type G domain is found at 344–514; sequence PRAPVVTIMG…ALQAEIMELK (171 aa). The tract at residues 353-360 is G1; that stretch reads GHVDHGKT. A GTP-binding site is contributed by 353–360; sequence GHVDHGKT. The tract at residues 378–382 is G2; it reads GITQH. A G3 region spans residues 400–403; it reads DTPG. GTP-binding positions include 400–404 and 454–457; these read DTPGH and NKVD. The segment at 454-457 is G4; that stretch reads NKVD. Positions 490 to 492 are G5; that stretch reads SAL.

The protein belongs to the TRAFAC class translation factor GTPase superfamily. Classic translation factor GTPase family. IF-2 subfamily.

The protein localises to the cytoplasm. Functionally, one of the essential components for the initiation of protein synthesis. Protects formylmethionyl-tRNA from spontaneous hydrolysis and promotes its binding to the 30S ribosomal subunits. Also involved in the hydrolysis of GTP during the formation of the 70S ribosomal complex. The protein is Translation initiation factor IF-2 of Sphingopyxis alaskensis (strain DSM 13593 / LMG 18877 / RB2256) (Sphingomonas alaskensis).